The following is an 89-amino-acid chain: Small ribosomal subunit protein eS25A (89 aa).

Belongs to the eukaryotic ribosomal protein eS25 family. In terms of assembly, component of the small ribosomal subunit (SSU). Mature yeast ribosomes consist of a small (40S) and a large (60S) subunit. The 40S small subunit contains 1 molecule of ribosomal RNA (18S rRNA) and at least 33 different proteins. The large 60S subunit contains 3 rRNA molecules (25S, 5.8S and 5S rRNA) and at least 46 different proteins.

It is found in the cytoplasm. In terms of biological role, component of the ribosome, a large ribonucleoprotein complex responsible for the synthesis of proteins in the cell. The small ribosomal subunit (SSU) binds messenger RNAs (mRNAs) and translates the encoded message by selecting cognate aminoacyl-transfer RNA (tRNA) molecules. The large subunit (LSU) contains the ribosomal catalytic site termed the peptidyl transferase center (PTC), which catalyzes the formation of peptide bonds, thereby polymerizing the amino acids delivered by tRNAs into a polypeptide chain. The nascent polypeptides leave the ribosome through a tunnel in the LSU and interact with protein factors that function in enzymatic processing, targeting, and the membrane insertion of nascent chains at the exit of the ribosomal tunnel. The polypeptide is Small ribosomal subunit protein eS25A (rps2502) (Schizosaccharomyces pombe (strain 972 / ATCC 24843) (Fission yeast)).